A 186-amino-acid polypeptide reads, in one-letter code: Glutathione-independent glyoxalase DJR-1.2 (186 aa).

Catalysis depends on residues Glu-20, Cys-105, and His-124.

It belongs to the peptidase C56 family. DJ-1 subfamily. As to expression, expressed in various tissues, including pharyngeal muscles, pharynx-intestinal valve, ventral nerve cord, spermatheca, rectal gland, inner labial (IL) cells of head neurons, phasmid (PHA/PHB) neurons in tail and supporting sheath/socket cells, as well as in head mesodermal cells (HMC), excretory canals and coelomocytes.

The protein localises to the cytoplasm. The enzyme catalyses methylglyoxal + H2O = (R)-lactate + H(+). Its function is as follows. Catalyzes the conversion of methylglyoxal (MG) or glyoxal (GO) to D-lactate or glycolic acid respectively in a single glutathione (GSH)-independent step. May play a role in detoxifying endogenously produced glyoxals. Involved in protection against glyoxal-induced cell death. Protects dopaminergic neurons from glyoxal-dependent neuronal degeneration. In Caenorhabditis elegans, this protein is Glutathione-independent glyoxalase DJR-1.2.